Consider the following 1021-residue polypeptide: 2-oxoglutarate dehydrogenase complex component E1 (1021 aa).

A mitochondrion-targeting transit peptide spans 1–40 (MFNLRTCASKLRPLTASQTIRSLKHNRPAAPRTFQQFRCL). Positions 142, 155, and 157 each coordinate Ca(2+). Residues Arg-311, Asp-410, Asn-443, and Ile-445 each contribute to the thiamine diphosphate site. Residues Asp-410, Asn-443, and Ile-445 each coordinate Mg(2+). Lys-533 is covalently cross-linked (Glycyl lysine isopeptide (Lys-Gly) (interchain with G-Cter in ubiquitin)). Gln-675 lines the thiamine diphosphate pocket.

The protein belongs to the alpha-ketoglutarate dehydrogenase family. Homodimer. The 2-oxoglutarate dehydrogenase complex is composed of OGDH (2-oxoglutarate dehydrogenase; E1), DLST (dihydrolipoamide succinyltransferase; E2) and DLD (dihydrolipoamide dehydrogenase; E3). It contains multiple copies of the three enzymatic components (E1, E2 and E3). In the nucleus, the 2-oxoglutarate dehydrogenase complex associates with kat2a. Thiamine diphosphate is required as a cofactor. The cofactor is Mg(2+). In terms of tissue distribution, expressed in the brain.

Its subcellular location is the mitochondrion. It is found in the nucleus. The catalysed reaction is N(6)-[(R)-lipoyl]-L-lysyl-[protein] + 2-oxoglutarate + H(+) = N(6)-[(R)-S(8)-succinyldihydrolipoyl]-L-lysyl-[protein] + CO2. With respect to regulation, calcium ions and ADP stimulate, whereas ATP and NADH reduce catalytic activity. Its function is as follows. 2-oxoglutarate dehydrogenase (E1o) component of the 2-oxoglutarate dehydrogenase complex (OGDHC). Participates in the first step, rate limiting for the overall conversion of 2-oxoglutarate to succinyl-CoA and CO(2) catalyzed by the whole OGDHC. Catalyzes the irreversible decarboxylation of 2-oxoglutarate (alpha-ketoglutarate) via the thiamine diphosphate (ThDP) cofactor and subsequent transfer of the decarboxylated acyl intermediate on an oxidized dihydrolipoyl group that is covalently amidated to the E2 enzyme (dihydrolipoyllysine-residue succinyltransferase or DLST). Plays a key role in the Krebs (citric acid) cycle, which is a common pathway for oxidation of fuel molecules, including carbohydrates, fatty acids, and amino acids. Can catalyze the decarboxylation of 2-oxoadipate in vitro, but at a much lower rate than 2-oxoglutarate. Mainly active in the mitochondrion. A fraction of the 2-oxoglutarate dehydrogenase complex also localizes in the nucleus and is required for lysine succinylation of histones: associates with KAT2A on chromatin and provides succinyl-CoA to histone succinyltransferase KAT2A. The chain is 2-oxoglutarate dehydrogenase complex component E1 (ogdh) from Xenopus laevis (African clawed frog).